Here is a 728-residue protein sequence, read N- to C-terminus: Methionine--tRNA ligase (728 aa).

The 'HIGH' region motif lies at 13–23 (PYANGSIHLGH). Residues C144, C147, C157, and C160 each coordinate Zn(2+). Residues 348 to 352 (KMSKS) carry the 'KMSKS' region motif. K351 serves as a coordination point for ATP. Positions 585–620 (LAPAKSQQVAQAVETMEKNSSTTPAPAKEGEAGQAS) are disordered. In terms of domain architecture, tRNA-binding spans 628–728 (DFGKIDLRVA…EGARPGMKVK (101 aa)).

Belongs to the class-I aminoacyl-tRNA synthetase family. MetG type 1 subfamily. Homodimer. Requires Zn(2+) as cofactor.

Its subcellular location is the cytoplasm. The enzyme catalyses tRNA(Met) + L-methionine + ATP = L-methionyl-tRNA(Met) + AMP + diphosphate. In terms of biological role, is required not only for elongation of protein synthesis but also for the initiation of all mRNA translation through initiator tRNA(fMet) aminoacylation. The sequence is that of Methionine--tRNA ligase from Nitrosospira multiformis (strain ATCC 25196 / NCIMB 11849 / C 71).